A 346-amino-acid polypeptide reads, in one-letter code: Phosphoribosylformylglycinamidine cyclo-ligase (346 aa).

It belongs to the AIR synthase family.

Its subcellular location is the cytoplasm. It catalyses the reaction 2-formamido-N(1)-(5-O-phospho-beta-D-ribosyl)acetamidine + ATP = 5-amino-1-(5-phospho-beta-D-ribosyl)imidazole + ADP + phosphate + H(+). It functions in the pathway purine metabolism; IMP biosynthesis via de novo pathway; 5-amino-1-(5-phospho-D-ribosyl)imidazole from N(2)-formyl-N(1)-(5-phospho-D-ribosyl)glycinamide: step 2/2. In Synechococcus sp. (strain CC9311), this protein is Phosphoribosylformylglycinamidine cyclo-ligase.